The following is a 643-amino-acid chain: DNA gyrase subunit B (643 aa).

Positions 428–542 constitute a Toprim domain; the sequence is SEIFLVEGDS…AGYVYIAQPP (115 aa). The Mg(2+) site is built by E434, D507, and D509.

This sequence belongs to the type II topoisomerase GyrB family. In terms of assembly, heterotetramer, composed of two GyrA and two GyrB chains. In the heterotetramer, GyrA contains the active site tyrosine that forms a transient covalent intermediate with DNA, while GyrB binds cofactors and catalyzes ATP hydrolysis. Requires Mg(2+) as cofactor. The cofactor is Mn(2+). Ca(2+) serves as cofactor.

It localises to the cytoplasm. The catalysed reaction is ATP-dependent breakage, passage and rejoining of double-stranded DNA.. In terms of biological role, a type II topoisomerase that negatively supercoils closed circular double-stranded (ds) DNA in an ATP-dependent manner to modulate DNA topology and maintain chromosomes in an underwound state. Negative supercoiling favors strand separation, and DNA replication, transcription, recombination and repair, all of which involve strand separation. Also able to catalyze the interconversion of other topological isomers of dsDNA rings, including catenanes and knotted rings. Type II topoisomerases break and join 2 DNA strands simultaneously in an ATP-dependent manner. The chain is DNA gyrase subunit B from Staphylococcus epidermidis (strain ATCC 35984 / DSM 28319 / BCRC 17069 / CCUG 31568 / BM 3577 / RP62A).